A 362-amino-acid polypeptide reads, in one-letter code: 1-aminocyclopropane-1-carboxylate oxidase homolog 10 (362 aa).

The Fe2OG dioxygenase domain maps to 211 to 310; that stretch reads KGLFMLCHYY…RISVACFFSS (100 aa). Fe cation is bound by residues His-235, Asp-237, and His-291. Arg-301 provides a ligand contact to 2-oxoglutarate.

The protein belongs to the iron/ascorbate-dependent oxidoreductase family. Requires Fe(2+) as cofactor.

This is 1-aminocyclopropane-1-carboxylate oxidase homolog 10 from Arabidopsis thaliana (Mouse-ear cress).